The chain runs to 354 residues: 3-dehydroquinate synthase (354 aa).

NAD(+) is bound by residues 61 to 66, 119 to 120, Lys132, Lys141, and 159 to 162; these read DGESTK, TT, and FLET. The Zn(2+) site is built by Glu174, His238, and His254.

It belongs to the sugar phosphate cyclases superfamily. Dehydroquinate synthase family. NAD(+) is required as a cofactor. Requires Co(2+) as cofactor. It depends on Zn(2+) as a cofactor.

It localises to the cytoplasm. It carries out the reaction 7-phospho-2-dehydro-3-deoxy-D-arabino-heptonate = 3-dehydroquinate + phosphate. It functions in the pathway metabolic intermediate biosynthesis; chorismate biosynthesis; chorismate from D-erythrose 4-phosphate and phosphoenolpyruvate: step 2/7. In terms of biological role, catalyzes the conversion of 3-deoxy-D-arabino-heptulosonate 7-phosphate (DAHP) to dehydroquinate (DHQ). The chain is 3-dehydroquinate synthase from Saccharolobus solfataricus (strain ATCC 35092 / DSM 1617 / JCM 11322 / P2) (Sulfolobus solfataricus).